Here is a 388-residue protein sequence, read N- to C-terminus: Cell adhesion molecule 4 (388 aa).

The signal sequence occupies residues 1 to 20 (MGRARRFQWPLLLLWAAAAG). An Ig-like V-type domain is found at 21–119 (PGTGQEVQTE…DTHHQIATLT (99 aa)). At 25 to 324 (QEVQTENVTV…VEAQTSVPYA (300 aa)) the chain is on the extracellular side. N-linked (GlcNAc...) asparagine glycans are attached at residues N31 and N67. 3 disulfides stabilise this stretch: C44–C104, C145–C199, and C245–C291. Ig-like C2-type domains are found at residues 124-219 (PENP…YVLD) and 224-307 (PTAR…YVLV). N286 is a glycosylation site (N-linked (GlcNAc...) asparagine). A helical transmembrane segment spans residues 325-345 (IVGGILALLVFLIICVLVGMV). Over 346–388 (WCSVRQKGSYLTHEASGLDEQGEAREAFLNGGDGHKRKEEFFI) the chain is Cytoplasmic. S361 carries the post-translational modification Phosphoserine.

The protein belongs to the nectin family. In terms of assembly, monomer and homodimer. Post-translationally, N-glycosylated. Expressed in the brain and several organs including the kidney and liver.

Its subcellular location is the membrane. Functionally, involved in the cell-cell adhesion. Has calcium- and magnesium-independent cell-cell adhesion activity. May have tumor-suppressor activity. The polypeptide is Cell adhesion molecule 4 (Cadm4) (Mus musculus (Mouse)).